Reading from the N-terminus, the 39-residue chain is Photosystem II reaction center protein I (39 aa).

The chain crosses the membrane as a helical span at residues 6 to 26; the sequence is ISVYSVVFFFIGIFMFGFLAS.

This sequence belongs to the PsbI family. As to quaternary structure, PSII is composed of 1 copy each of membrane proteins PsbA, PsbB, PsbC, PsbD, PsbE, PsbF, PsbH, PsbI, PsbJ, PsbK, PsbL, PsbM, PsbT, PsbX, PsbY, PsbZ, Psb30/Ycf12, peripheral proteins PsbO, CyanoQ (PsbQ), PsbU, PsbV and a large number of cofactors. It forms dimeric complexes.

It localises to the cellular thylakoid membrane. Its function is as follows. One of the components of the core complex of photosystem II (PSII), required for its stability and/or assembly. PSII is a light-driven water:plastoquinone oxidoreductase that uses light energy to abstract electrons from H(2)O, generating O(2) and a proton gradient subsequently used for ATP formation. It consists of a core antenna complex that captures photons, and an electron transfer chain that converts photonic excitation into a charge separation. The sequence is that of Photosystem II reaction center protein I from Synechococcus sp. (strain RCC307).